Here is a 335-residue protein sequence, read N- to C-terminus: DNA-directed RNA polymerase subunit alpha (335 aa).

Residues 1 to 233 form an alpha N-terminal domain (alpha-NTD) region; that stretch reads MIRDKISVSI…DLFIPFLHGE (233 aa). Residues 264 to 335 are alpha C-terminal domain (alpha-CTD); that stretch reads KEKIAFKHIF…KRFAIDPPRN (72 aa).

Belongs to the RNA polymerase alpha chain family. As to quaternary structure, in plastids the minimal PEP RNA polymerase catalytic core is composed of four subunits: alpha, beta, beta', and beta''. When a (nuclear-encoded) sigma factor is associated with the core the holoenzyme is formed, which can initiate transcription.

The protein resides in the plastid. It localises to the chloroplast. It carries out the reaction RNA(n) + a ribonucleoside 5'-triphosphate = RNA(n+1) + diphosphate. In terms of biological role, DNA-dependent RNA polymerase catalyzes the transcription of DNA into RNA using the four ribonucleoside triphosphates as substrates. The chain is DNA-directed RNA polymerase subunit alpha from Pinus koraiensis (Korean pine).